Reading from the N-terminus, the 142-residue chain is Universal stress protein C (142 aa).

This sequence belongs to the universal stress protein A family.

The protein localises to the cytoplasm. In terms of biological role, required for resistance to DNA-damaging agents. The chain is Universal stress protein C (uspC) from Escherichia coli O157:H7.